We begin with the raw amino-acid sequence, 395 residues long: Testis-expressed protein 44 (395 aa).

Disordered regions lie at residues 1–32 (MALPGYPLGNVDDSRSKDSPAGEPQGQVPLTA), 46–100 (WQDI…LQVS), 133–215 (KMSQ…SDES), and 235–258 (FPPPPAGSVSPSPGPHEVALGRRP). Polar residues predominate over residues 53–65 (SFKTATPRAISTS). The segment covering 87-98 (PLLPSQNPSPLQ) has biased composition (low complexity). Residues 192–207 (SAEEKAEHPKAPHPEA) show a composition bias toward basic and acidic residues. S333 carries the post-translational modification Phosphoserine.

As to expression, testis. Detected in germ cells at all stages of the seminiferous epithelium, strong expression in elongating spermatids (at protein level).

The protein resides in the cytoplasm. The polypeptide is Testis-expressed protein 44 (Homo sapiens (Human)).